Reading from the N-terminus, the 220-residue chain is Ribosomal RNA small subunit methyltransferase Nep1 (220 aa).

Residues Gly178, Gly183, and Ile196–Leu201 contribute to the S-adenosyl-L-methionine site.

The protein belongs to the class IV-like SAM-binding methyltransferase superfamily. RNA methyltransferase NEP1 family. In terms of assembly, homodimer.

The catalysed reaction is a pseudouridine in rRNA + S-adenosyl-L-methionine = an N(1)-methylpseudouridine in rRNA + S-adenosyl-L-homocysteine + H(+). Functionally, methyltransferase involved in ribosomal biogenesis. Specifically catalyzes the N1-methylation of the pseudouridine corresponding to position 914 in M.jannaschii 16S rRNA. The chain is Ribosomal RNA small subunit methyltransferase Nep1 from Thermococcus sibiricus (strain DSM 12597 / MM 739).